A 1402-amino-acid chain; its full sequence is DNA-directed RNA polymerase subunit beta' (1402 aa).

The Zn(2+) site is built by Cys71, Cys73, Cys86, and Cys89. The Mg(2+) site is built by Asp462, Asp464, and Asp466. Residues Cys808, Cys881, Cys888, and Cys891 each coordinate Zn(2+).

Belongs to the RNA polymerase beta' chain family. In terms of assembly, the RNAP catalytic core consists of 2 alpha, 1 beta, 1 beta' and 1 omega subunit. When a sigma factor is associated with the core the holoenzyme is formed, which can initiate transcription. Mg(2+) is required as a cofactor. Requires Zn(2+) as cofactor.

It carries out the reaction RNA(n) + a ribonucleoside 5'-triphosphate = RNA(n+1) + diphosphate. Its function is as follows. DNA-dependent RNA polymerase catalyzes the transcription of DNA into RNA using the four ribonucleoside triphosphates as substrates. This is DNA-directed RNA polymerase subunit beta' from Hyphomonas neptunium (strain ATCC 15444).